A 162-amino-acid chain; its full sequence is Ribose-5-phosphate isomerase B (162 aa).

D-ribulose 5-phosphate contacts are provided by residues 11–12 (DH) and 70–74 (GSGNG). The Proton acceptor role is filled by Glu75. His102 functions as the Proton donor in the catalytic mechanism. Residues Asn103, Arg113, Arg137, and Arg141 each contribute to the D-ribulose 5-phosphate site.

The protein belongs to the LacAB/RpiB family. In terms of assembly, homodimer.

It carries out the reaction aldehydo-D-ribose 5-phosphate = D-ribulose 5-phosphate. It functions in the pathway carbohydrate degradation; pentose phosphate pathway; D-ribose 5-phosphate from D-ribulose 5-phosphate (non-oxidative stage): step 1/1. Catalyzes the interconversion of ribulose-5-P and ribose-5-P. The sequence is that of Ribose-5-phosphate isomerase B from Mycobacterium bovis (strain ATCC BAA-935 / AF2122/97).